Consider the following 701-residue polypeptide: Protein SOSEKI 1 (701 aa).

A DIX-like oligomerization domain region spans residues 8–101; sequence LSAQVLYQLS…YVLRASELID (94 aa). 4 disordered regions span residues 238-262, 300-329, 366-389, and 538-575; these read STVH…FSPG, LPPN…SLNE, PYNT…YRTK, and IASS…LASP. Residues 306-319 are compositionally biased toward basic and acidic residues; it reads STHEDNSFWRDSRS. The segment at 658 to 687 adopts a C2HC/C3H-type zinc-finger fold; it reads ILQECSICRRTFKPDSLQVHMRGCHPPQYA. Zn(2+)-binding residues include Cys-662, Cys-665, His-677, and Cys-681.

It belongs to the SOSEKI family. As to quaternary structure, homodimer. Forms long polymer filaments with other SOKs proteins polymers crucial for polar localization and biological activity. It depends on Zn(2+) as a cofactor.

It is found in the cell membrane. Its function is as follows. SOSEKI proteins locally interpret global polarity cues and can influence cell division orientation to coordinate cell polarization relative to body axes. This Physcomitrium patens (Spreading-leaved earth moss) protein is Protein SOSEKI 1.